The chain runs to 282 residues: Putative 4-diphosphocytidyl-2-C-methyl-D-erythritol kinase (282 aa).

Residue K9 is part of the active site. 93–103 serves as a coordination point for ATP; the sequence is PVSAGLAGGSA. D135 is a catalytic residue.

It belongs to the GHMP kinase family. IspE subfamily.

It catalyses the reaction 4-CDP-2-C-methyl-D-erythritol + ATP = 4-CDP-2-C-methyl-D-erythritol 2-phosphate + ADP + H(+). In terms of biological role, catalyzes the phosphorylation of the position 2 hydroxy group of 4-diphosphocytidyl-2C-methyl-D-erythritol. The chain is Putative 4-diphosphocytidyl-2-C-methyl-D-erythritol kinase from Staphylococcus aureus (strain MRSA252).